Consider the following 417-residue polypeptide: Glutamyl-tRNA(Gln) amidotransferase subunit D (417 aa).

The 328-residue stretch at 73-400 folds into the Asparaginase/glutaminase domain; sequence EKVWLLATGG…EEVPRVLTTP (328 aa). Catalysis depends on residues Thr83, Thr157, Asp158, and Lys236.

The protein belongs to the asparaginase 1 family. GatD subfamily. In terms of assembly, heterodimer of GatD and GatE.

The enzyme catalyses L-glutamyl-tRNA(Gln) + L-glutamine + ATP + H2O = L-glutaminyl-tRNA(Gln) + L-glutamate + ADP + phosphate + H(+). Allows the formation of correctly charged Gln-tRNA(Gln) through the transamidation of misacylated Glu-tRNA(Gln) in organisms which lack glutaminyl-tRNA synthetase. The reaction takes place in the presence of glutamine and ATP through an activated gamma-phospho-Glu-tRNA(Gln). The GatDE system is specific for glutamate and does not act on aspartate. This chain is Glutamyl-tRNA(Gln) amidotransferase subunit D, found in Pyrobaculum aerophilum (strain ATCC 51768 / DSM 7523 / JCM 9630 / CIP 104966 / NBRC 100827 / IM2).